Consider the following 341-residue polypeptide: S-adenosylmethionine:tRNA ribosyltransferase-isomerase (341 aa).

It belongs to the QueA family. As to quaternary structure, monomer.

It localises to the cytoplasm. The enzyme catalyses 7-aminomethyl-7-carbaguanosine(34) in tRNA + S-adenosyl-L-methionine = epoxyqueuosine(34) in tRNA + adenine + L-methionine + 2 H(+). The protein operates within tRNA modification; tRNA-queuosine biosynthesis. Transfers and isomerizes the ribose moiety from AdoMet to the 7-aminomethyl group of 7-deazaguanine (preQ1-tRNA) to give epoxyqueuosine (oQ-tRNA). This is S-adenosylmethionine:tRNA ribosyltransferase-isomerase from Alkaliphilus metalliredigens (strain QYMF).